Here is a 160-residue protein sequence, read N- to C-terminus: Cytochrome b6-f complex subunit 4 (160 aa).

Helical transmembrane passes span 36-56 (LLYVFPLTMLGTLTCIVGLSV), 95-115 (LLGVLAMAAVPLGLITVPFIE), and 131-151 (LTFIFGFFTAVWLGIGACVPI).

The protein belongs to the cytochrome b family. PetD subfamily. As to quaternary structure, the 4 large subunits of the cytochrome b6-f complex are cytochrome b6, subunit IV (17 kDa polypeptide, petD), cytochrome f and the Rieske protein, while the 4 small subunits are petG, petL, petM and petN. The complex functions as a dimer.

The protein localises to the plastid. It localises to the chloroplast thylakoid membrane. Functionally, component of the cytochrome b6-f complex, which mediates electron transfer between photosystem II (PSII) and photosystem I (PSI), cyclic electron flow around PSI, and state transitions. This is Cytochrome b6-f complex subunit 4 from Phaeodactylum tricornutum (strain CCAP 1055/1).